We begin with the raw amino-acid sequence, 547 residues long: MQAKTLADLYSDWDKVQAHAQAWQKRTLKDAFDADRNRAARYSVGAAGLELDFSKNHIDDETLQLLMGVADQANLKAAIKKLLRGDHVNNTEDRPALHSALRFQGKPQTAEHQEVKATLDKMAKLIKSVHSGEWKGYKGEKITDVVNIGIGGSDLGPRMITKALTPFHTGDVKVHFVANIDGAEIHDLTRGLNPSTTLFLVASKSFSTLETLENSLTARKWMLDNGCAQDQLAKHFVAISSKVEKAVEFGIAAENVYPIWDWVGGRYSLWSAIGMPIAFAIGMDNFNKLRAGAAAMDDHFAEAPLERNIPALMGLLMFWYSSCLGTDTQAILPYAYHLQLLPAYLQQLEMESNGKSVTKSGERVDYQTGSIVWGTEGTNGQHSFHQLLHQGTTMVPIDFIATLQAHHPLDHQHKFLFANCVAQSQALMTGRDQATSEAEMRAQGMSDEQIAELAPHKVHPGNRPSNTILMDKLTPETLGALIAAYEHKVYTLGVLWNINSFDQWGVELGKLLGTHVATAIDTTDIPSDWDSSTQTLVKKFTEANKNL.

Glutamate 351 (proton donor) is an active-site residue. Residues histidine 382 and lysine 510 contribute to the active site.

Belongs to the GPI family.

Its subcellular location is the cytoplasm. It carries out the reaction alpha-D-glucose 6-phosphate = beta-D-fructose 6-phosphate. Its pathway is carbohydrate biosynthesis; gluconeogenesis. The protein operates within carbohydrate degradation; glycolysis; D-glyceraldehyde 3-phosphate and glycerone phosphate from D-glucose: step 2/4. Functionally, catalyzes the reversible isomerization of glucose-6-phosphate to fructose-6-phosphate. The protein is Glucose-6-phosphate isomerase of Saccharophagus degradans (strain 2-40 / ATCC 43961 / DSM 17024).